A 219-amino-acid polypeptide reads, in one-letter code: Putative zinc metalloprotease YwhC (219 aa).

Residues 4-24 (FLYYPLSLMPYLVITLIVSFT) form a helical membrane-spanning segment. Position 26 (His-26) interacts with Zn(2+). The active site involves Glu-27. Position 30 (His-30) interacts with Zn(2+). 4 consecutive transmembrane segments (helical) span residues 52–72 (PIKH…FGWA), 94–114 (IAGP…LVLM), 132–152 (FFSI…LPLP), and 180–200 (FIVF…WPML).

This sequence belongs to the peptidase M50B family. Requires Zn(2+) as cofactor.

The protein resides in the cell membrane. This Bacillus subtilis (strain 168) protein is Putative zinc metalloprotease YwhC (ywhC).